The sequence spans 309 residues: tRNA dimethylallyltransferase (309 aa).

Residue 14 to 21 (GPTASGKS) participates in ATP binding. 16 to 21 (TASGKS) is a binding site for substrate. The segment at 39-42 (DSMQ) is interaction with substrate tRNA.

This sequence belongs to the IPP transferase family. Monomer. Mg(2+) serves as cofactor.

It catalyses the reaction adenosine(37) in tRNA + dimethylallyl diphosphate = N(6)-dimethylallyladenosine(37) in tRNA + diphosphate. Functionally, catalyzes the transfer of a dimethylallyl group onto the adenine at position 37 in tRNAs that read codons beginning with uridine, leading to the formation of N6-(dimethylallyl)adenosine (i(6)A). The protein is tRNA dimethylallyltransferase of Geobacter metallireducens (strain ATCC 53774 / DSM 7210 / GS-15).